A 264-amino-acid chain; its full sequence is S-adenosylmethionine decarboxylase proenzyme (264 aa).

Serine 112 functions as the Schiff-base intermediate with substrate; via pyruvic acid in the catalytic mechanism. Pyruvic acid (Ser); by autocatalysis is present on serine 112. Histidine 117 acts as the Proton acceptor; for processing activity in catalysis. Cysteine 140 serves as the catalytic Proton donor; for catalytic activity.

Belongs to the prokaryotic AdoMetDC family. Type 2 subfamily. Heterooctamer of four alpha and four beta chains arranged as a tetramer of alpha/beta heterodimers. Pyruvate serves as cofactor. Post-translationally, is synthesized initially as an inactive proenzyme. Formation of the active enzyme involves a self-maturation process in which the active site pyruvoyl group is generated from an internal serine residue via an autocatalytic post-translational modification. Two non-identical subunits are generated from the proenzyme in this reaction, and the pyruvate is formed at the N-terminus of the alpha chain, which is derived from the carboxyl end of the proenzyme. The post-translation cleavage follows an unusual pathway, termed non-hydrolytic serinolysis, in which the side chain hydroxyl group of the serine supplies its oxygen atom to form the C-terminus of the beta chain, while the remainder of the serine residue undergoes an oxidative deamination to produce ammonia and the pyruvoyl group blocking the N-terminus of the alpha chain.

It carries out the reaction S-adenosyl-L-methionine + H(+) = S-adenosyl 3-(methylsulfanyl)propylamine + CO2. Its pathway is amine and polyamine biosynthesis; S-adenosylmethioninamine biosynthesis; S-adenosylmethioninamine from S-adenosyl-L-methionine: step 1/1. Its function is as follows. Catalyzes the decarboxylation of S-adenosylmethionine to S-adenosylmethioninamine (dcAdoMet), the propylamine donor required for the synthesis of the polyamines spermine and spermidine from the diamine putrescine. The chain is S-adenosylmethionine decarboxylase proenzyme from Citrobacter koseri (strain ATCC BAA-895 / CDC 4225-83 / SGSC4696).